The sequence spans 614 residues: Interleukin-18 receptor accessory protein (614 aa).

An N-terminal signal peptide occupies residues 1–19 (MLCLGWVFLWFVAGEKTTG). The Extracellular portion of the chain corresponds to 20-356 (FNHSACATKK…RTIRLRKKEE (337 aa)). The N-linked (GlcNAc...) asparagine glycan is linked to N21. C46 and C126 form a disulfide bridge. The segment at 59 to 78 (ASQLSPTQSPAHKPCSGSQK) is disordered. 2 consecutive Ig-like C2-type domains span residues 148-234 (PQRN…WTVR) and 250-352 (PEIL…IRLR). N-linked (GlcNAc...) asparagine glycosylation occurs at N151. 3 cysteine pairs are disulfide-bonded: C154/C179, C174/C220, and C179/C220. N-linked (GlcNAc...) asparagine glycosylation occurs at N227. C272 and C336 are disulfide-bonded. N-linked (GlcNAc...) asparagine glycosylation occurs at N344. A helical membrane pass occupies residues 357–377 (VVFVYILLGTALMLVGVLVAA). The Cytoplasmic segment spans residues 378–614 (AFLYWYWIEV…LLLYSDQKRC (237 aa)). In terms of domain architecture, TIR spans 405-558 (KEFDAFVSYS…RFWTQIRYHM (154 aa)). E492 is a catalytic residue.

The protein belongs to the interleukin-1 receptor family. In terms of assembly, forms a ternary complex with IL18 and IL18R1. Within this complex, IL18R1 is involved in ligand-binding and IL18RAP in signaling leading to NF-kappa-B and JNK activation.

It localises to the cell membrane. It carries out the reaction NAD(+) + H2O = ADP-D-ribose + nicotinamide + H(+). In terms of biological role, within the IL18 receptor complex, does not mediate IL18-binding, but involved in IL18-dependent signal transduction, leading to NF-kappa-B and JNK activation. May play a role in IL18-mediated IFNG synthesis from T-helper 1 (Th1) cells. In Mus musculus (Mouse), this protein is Interleukin-18 receptor accessory protein.